Reading from the N-terminus, the 189-residue chain is Chitin synthase 2 (189 aa).

This sequence belongs to the chitin synthase family. Class II subfamily.

Its subcellular location is the cell membrane. The catalysed reaction is [(1-&gt;4)-N-acetyl-beta-D-glucosaminyl](n) + UDP-N-acetyl-alpha-D-glucosamine = [(1-&gt;4)-N-acetyl-beta-D-glucosaminyl](n+1) + UDP + H(+). Its function is as follows. Polymerizes chitin, a structural polymer of the cell wall and septum, by transferring the sugar moiety of UDP-GlcNAc to the non-reducing end of the growing chitin polymer. The sequence is that of Chitin synthase 2 (CHS2) from Xylohypha bantiana.